A 445-amino-acid chain; its full sequence is Phosphoglucosamine mutase (445 aa).

The Phosphoserine intermediate role is filled by serine 104. Mg(2+)-binding residues include serine 104, aspartate 243, aspartate 245, and aspartate 247. Position 104 is a phosphoserine (serine 104).

Belongs to the phosphohexose mutase family. Requires Mg(2+) as cofactor. Post-translationally, activated by phosphorylation.

The enzyme catalyses alpha-D-glucosamine 1-phosphate = D-glucosamine 6-phosphate. Catalyzes the conversion of glucosamine-6-phosphate to glucosamine-1-phosphate. This is Phosphoglucosamine mutase from Chromobacterium violaceum (strain ATCC 12472 / DSM 30191 / JCM 1249 / CCUG 213 / NBRC 12614 / NCIMB 9131 / NCTC 9757 / MK).